The sequence spans 130 residues: Odontogenesis associated phosphoprotein (130 aa).

The signal sequence occupies residues 1–23; the sequence is MARRHCFSYWLLVCWLVVTVAEG.

As to expression, highly expressed in placenta.

The protein localises to the secreted. Functionally, may promote nucleation of hydroxyapatite. The chain is Odontogenesis associated phosphoprotein from Homo sapiens (Human).